The following is a 125-amino-acid chain: TSSK6-activating co-chaperone protein (125 aa).

The segment at 1-22 is disordered; the sequence is MEQLPSHPTNRRAKEEGNAVPL.

Belongs to the TSACC family. In terms of assembly, interacts with HSP70. Associates with HSP90. Interacts with TSSK6; this interaction is direct and recruits TSACC to HSP90.

Co-chaperone that facilitates HSP-mediated activation of TSSK6. This is TSSK6-activating co-chaperone protein (TSACC) from Bos taurus (Bovine).